The primary structure comprises 274 residues: Cytochrome c oxidase subunit 3 (274 aa).

Over 1–15 (MTHQTHAYHMVNPSP) the chain is Mitochondrial matrix. Residues 16 to 34 (WPLTGALSALLMTSGLAMW) form a helical membrane-spanning segment. The Mitochondrial intermembrane portion of the chain corresponds to 35 to 40 (FHFNSS). A helical membrane pass occupies residues 41–66 (MLLSLGMLTNLLTMYQWWRDIVREGT). The Mitochondrial matrix segment spans residues 67–72 (FQGHHT). A helical membrane pass occupies residues 73–105 (SIVQKGLRYGMVLFIISEIFFFAGFFWAFYHSS). The Mitochondrial intermembrane portion of the chain corresponds to 106–128 (LAPTPELGGCWPPTGIHPLNPLE). A helical transmembrane segment spans residues 129 to 152 (VPLLNTAVLLASGVSITWAHHSLM). Residues 153–155 (EGN) lie on the Mitochondrial matrix side of the membrane. The chain crosses the membrane as a helical span at residues 156–183 (RVQMLQALLITITLGLYFTLLQASEYFE). Residues 184–190 (TSFTISD) lie on the Mitochondrial intermembrane side of the membrane. Residues 191 to 223 (GVYGSTFFMATGFHGLHVIIGSTFLTVCFFRQL) traverse the membrane as a helical segment. The Mitochondrial matrix portion of the chain corresponds to 224–232 (SFHFTSNHH). The helical transmembrane segment at 233-256 (FGFEAAAWYWHFVDVVWLFLYVSI) threads the bilayer. Over 257 to 274 (YWWGSYSFSIDPMQLTSN) the chain is Mitochondrial intermembrane.

The protein belongs to the cytochrome c oxidase subunit 3 family. As to quaternary structure, component of the cytochrome c oxidase (complex IV, CIV), a multisubunit enzyme composed of 14 subunits. The complex is composed of a catalytic core of 3 subunits MT-CO1, MT-CO2 and MT-CO3, encoded in the mitochondrial DNA, and 11 supernumerary subunits COX4I, COX5A, COX5B, COX6A, COX6B, COX6C, COX7A, COX7B, COX7C, COX8 and NDUFA4, which are encoded in the nuclear genome. The complex exists as a monomer or a dimer and forms supercomplexes (SCs) in the inner mitochondrial membrane with NADH-ubiquinone oxidoreductase (complex I, CI) and ubiquinol-cytochrome c oxidoreductase (cytochrome b-c1 complex, complex III, CIII), resulting in different assemblies (supercomplex SCI(1)III(2)IV(1) and megacomplex MCI(2)III(2)IV(2)).

Its subcellular location is the mitochondrion inner membrane. It catalyses the reaction 4 Fe(II)-[cytochrome c] + O2 + 8 H(+)(in) = 4 Fe(III)-[cytochrome c] + 2 H2O + 4 H(+)(out). Its function is as follows. Component of the cytochrome c oxidase, the last enzyme in the mitochondrial electron transport chain which drives oxidative phosphorylation. The respiratory chain contains 3 multisubunit complexes succinate dehydrogenase (complex II, CII), ubiquinol-cytochrome c oxidoreductase (cytochrome b-c1 complex, complex III, CIII) and cytochrome c oxidase (complex IV, CIV), that cooperate to transfer electrons derived from NADH and succinate to molecular oxygen, creating an electrochemical gradient over the inner membrane that drives transmembrane transport and the ATP synthase. Cytochrome c oxidase is the component of the respiratory chain that catalyzes the reduction of oxygen to water. Electrons originating from reduced cytochrome c in the intermembrane space (IMS) are transferred via the dinuclear copper A center (CU(A)) of subunit 2 and heme A of subunit 1 to the active site in subunit 1, a binuclear center (BNC) formed by heme A3 and copper B (CU(B)). The BNC reduces molecular oxygen to 2 water molecules using 4 electrons from cytochrome c in the IMS and 4 protons from the mitochondrial matrix. The chain is Cytochrome c oxidase subunit 3 (MT-CO3) from Lemur catta (Ring-tailed lemur).